A 293-amino-acid chain; its full sequence is Ribosomal protein L11 methyltransferase (293 aa).

S-adenosyl-L-methionine is bound by residues Thr145, Gly166, Asp188, and Asn230.

It belongs to the methyltransferase superfamily. PrmA family.

It is found in the cytoplasm. It catalyses the reaction L-lysyl-[protein] + 3 S-adenosyl-L-methionine = N(6),N(6),N(6)-trimethyl-L-lysyl-[protein] + 3 S-adenosyl-L-homocysteine + 3 H(+). Methylates ribosomal protein L11. In Escherichia coli (strain SMS-3-5 / SECEC), this protein is Ribosomal protein L11 methyltransferase.